Here is a 103-residue protein sequence, read N- to C-terminus: Small ribosomal subunit protein uS10 (103 aa).

Belongs to the universal ribosomal protein uS10 family. As to quaternary structure, part of the 30S ribosomal subunit.

Functionally, involved in the binding of tRNA to the ribosomes. This is Small ribosomal subunit protein uS10 from Psychrobacter arcticus (strain DSM 17307 / VKM B-2377 / 273-4).